A 382-amino-acid polypeptide reads, in one-letter code: Galactokinase (382 aa).

Residue Glu34–Asp37 participates in substrate binding. Residue Gly124–Ser130 participates in ATP binding. Mg(2+) is bound by residues Ser130 and Glu162. The active-site Proton acceptor is Asp174. Substrate is bound at residue Tyr223.

This sequence belongs to the GHMP kinase family. GalK subfamily.

The protein localises to the cytoplasm. The catalysed reaction is alpha-D-galactose + ATP = alpha-D-galactose 1-phosphate + ADP + H(+). The protein operates within carbohydrate metabolism; galactose metabolism. In terms of biological role, catalyzes the transfer of the gamma-phosphate of ATP to D-galactose to form alpha-D-galactose-1-phosphate (Gal-1-P). The protein is Galactokinase of Salmonella choleraesuis (strain SC-B67).